A 705-amino-acid polypeptide reads, in one-letter code: Elongation factor G (705 aa).

The region spanning 8–290 (ERYRNFGIMA…GVVHLLPSPA (283 aa)) is the tr-type G domain. GTP contacts are provided by residues 17-24 (AHIDAGKT), 88-92 (DTPGH), and 142-145 (NKMD). A disordered region spans residues 290 to 309 (ADRPPVQGIDEDEKEDTRAA).

The protein belongs to the TRAFAC class translation factor GTPase superfamily. Classic translation factor GTPase family. EF-G/EF-2 subfamily.

The protein resides in the cytoplasm. In terms of biological role, catalyzes the GTP-dependent ribosomal translocation step during translation elongation. During this step, the ribosome changes from the pre-translocational (PRE) to the post-translocational (POST) state as the newly formed A-site-bound peptidyl-tRNA and P-site-bound deacylated tRNA move to the P and E sites, respectively. Catalyzes the coordinated movement of the two tRNA molecules, the mRNA and conformational changes in the ribosome. This is Elongation factor G from Xanthomonas euvesicatoria pv. vesicatoria (strain 85-10) (Xanthomonas campestris pv. vesicatoria).